We begin with the raw amino-acid sequence, 236 residues long: tRNA1(Val) (adenine(37)-N6)-methyltransferase (236 aa).

The protein belongs to the methyltransferase superfamily. tRNA (adenine-N(6)-)-methyltransferase family.

The protein localises to the cytoplasm. It catalyses the reaction adenosine(37) in tRNA1(Val) + S-adenosyl-L-methionine = N(6)-methyladenosine(37) in tRNA1(Val) + S-adenosyl-L-homocysteine + H(+). Functionally, specifically methylates the adenine in position 37 of tRNA(1)(Val) (anticodon cmo5UAC). The chain is tRNA1(Val) (adenine(37)-N6)-methyltransferase from Aeromonas salmonicida (strain A449).